The sequence spans 285 residues: Golgi phosphoprotein 3-like (285 aa).

The disordered stretch occupies residues 1-43 (MTTLTHRTRRTEVSKSCEKKIESEEDTNQERSPDNEDPGDSKD). Positions 10–43 (RTEVSKSCEKKIESEEDTNQERSPDNEDPGDSKD) are enriched in basic and acidic residues. Positions 67 and 76 each coordinate a 1,2-diacyl-sn-glycero-3-phospho-(1D-myo-inositol 4-phosphate). At Ser112 the chain carries Phosphoserine. The a 1,2-diacyl-sn-glycero-3-phospho-(1D-myo-inositol 4-phosphate) site is built by Arg157 and Arg160. The segment at 176 to 187 (EKQNFLLFDMTT) is beta-hairpin required for oligomerization.

It belongs to the GOLPH3/VPS74 family. As to quaternary structure, homooligomer. Does not interact MYO18; differs from GOLPH3 by its inability to interact with MYO18. May interact with ARF1.

It is found in the golgi apparatus. It localises to the golgi stack membrane. The protein localises to the trans-Golgi network membrane. Its function is as follows. Phosphatidylinositol-4-phosphate-binding protein that may antagonize the action of GOLPH3 which is required for the process of vesicle budding at the Golgi and anterograde transport to the plasma membrane. The chain is Golgi phosphoprotein 3-like (Golph3l) from Rattus norvegicus (Rat).